A 573-amino-acid chain; its full sequence is Sulfite reductase [NADPH] hemoprotein beta-component (573 aa).

The segment at 1-20 is disordered; sequence MAKVELKAPDGPPSDVERIK. [4Fe-4S] cluster is bound by residues Cys-438, Cys-444, Cys-483, and Cys-487. Position 487 (Cys-487) interacts with siroheme.

It belongs to the nitrite and sulfite reductase 4Fe-4S domain family. Alpha(8)-beta(8). The alpha component is a flavoprotein, the beta component is a hemoprotein. Siroheme serves as cofactor. The cofactor is [4Fe-4S] cluster.

The catalysed reaction is hydrogen sulfide + 3 NADP(+) + 3 H2O = sulfite + 3 NADPH + 4 H(+). The protein operates within sulfur metabolism; hydrogen sulfide biosynthesis; hydrogen sulfide from sulfite (NADPH route): step 1/1. Functionally, component of the sulfite reductase complex that catalyzes the 6-electron reduction of sulfite to sulfide. This is one of several activities required for the biosynthesis of L-cysteine from sulfate. In Geobacillus kaustophilus (strain HTA426), this protein is Sulfite reductase [NADPH] hemoprotein beta-component.